The primary structure comprises 280 residues: Urease accessory protein UreD 1 (280 aa).

The protein belongs to the UreD family. As to quaternary structure, ureD, UreF and UreG form a complex that acts as a GTP-hydrolysis-dependent molecular chaperone, activating the urease apoprotein by helping to assemble the nickel containing metallocenter of UreC. The UreE protein probably delivers the nickel.

The protein localises to the cytoplasm. Required for maturation of urease via the functional incorporation of the urease nickel metallocenter. This is Urease accessory protein UreD 1 from Brucella melitensis biotype 1 (strain ATCC 23456 / CCUG 17765 / NCTC 10094 / 16M).